The following is a 122-amino-acid chain: Prefoldin subunit 1 (122 aa).

Ala-2 carries the N-acetylalanine modification.

Belongs to the prefoldin subunit beta family. In terms of assembly, heterohexamer of two PFD-alpha type and four PFD-beta type subunits.

Functionally, binds specifically to cytosolic chaperonin (c-CPN) and transfers target proteins to it. Binds to nascent polypeptide chain and promotes folding in an environment in which there are many competing pathways for nonnative proteins. The chain is Prefoldin subunit 1 (PFDN1) from Pongo abelii (Sumatran orangutan).